The primary structure comprises 188 residues: Elongation factor P (188 aa).

It belongs to the elongation factor P family.

The protein localises to the cytoplasm. Its pathway is protein biosynthesis; polypeptide chain elongation. In terms of biological role, involved in peptide bond synthesis. Stimulates efficient translation and peptide-bond synthesis on native or reconstituted 70S ribosomes in vitro. Probably functions indirectly by altering the affinity of the ribosome for aminoacyl-tRNA, thus increasing their reactivity as acceptors for peptidyl transferase. The polypeptide is Elongation factor P (Mycoplasmoides gallisepticum (strain R(low / passage 15 / clone 2)) (Mycoplasma gallisepticum)).